The primary structure comprises 625 residues: Probable potassium transport system protein Kup 1 (625 aa).

A run of 12 helical transmembrane segments spans residues 14 to 34 (LSLL…TSPL), 50 to 70 (AAAV…ITTV), 104 to 124 (IVAL…ITPA), 139 to 159 (PALQ…LFAI), 170 to 190 (LFGP…LVGI), 213 to 233 (GATG…AEAL), 249 to 269 (WFAV…ALVI), 287 to 307 (LLLP…QSVI), 339 to 359 (IYVG…TIGF), 368 to 388 (AYGI…FIAM), 396 to 416 (LLAA…FFLA), and 421 to 441 (IAEG…LMWI).

The protein belongs to the HAK/KUP transporter (TC 2.A.72) family.

The protein localises to the cell inner membrane. It catalyses the reaction K(+)(in) + H(+)(in) = K(+)(out) + H(+)(out). In terms of biological role, transport of potassium into the cell. Likely operates as a K(+):H(+) symporter. This is Probable potassium transport system protein Kup 1 from Bradyrhizobium sp. (strain ORS 278).